Here is an 84-residue protein sequence, read N- to C-terminus: Cell division topological specificity factor (84 aa).

This sequence belongs to the MinE family.

In terms of biological role, prevents the cell division inhibition by proteins MinC and MinD at internal division sites while permitting inhibition at polar sites. This ensures cell division at the proper site by restricting the formation of a division septum at the midpoint of the long axis of the cell. This Pseudomonas syringae pv. tomato (strain ATCC BAA-871 / DC3000) protein is Cell division topological specificity factor.